A 145-amino-acid polypeptide reads, in one-letter code: Hemoglobin subunit beta-3 (145 aa).

In terms of domain architecture, Globin spans 1–145 (MLTAEEKAAV…VANALAHRYH (145 aa)). Threonine 11 bears the Phosphothreonine mark. N6-acetyllysine is present on lysine 58. A heme b-binding site is contributed by histidine 62. An N6-acetyllysine modification is found at lysine 81. Residue histidine 91 participates in heme b binding. Residue cysteine 92 is modified to S-nitrosocysteine.

The protein belongs to the globin family. Heterotetramer of two alpha chains and two beta chains. In terms of tissue distribution, red blood cells.

Involved in oxygen transport from the lung to the various peripheral tissues. The sequence is that of Hemoglobin subunit beta-3 (HBB) from Odocoileus virginianus virginianus (Virginia white-tailed deer).